We begin with the raw amino-acid sequence, 134 residues long: L-ectoine synthase (134 aa).

It belongs to the ectoine synthase family.

It carries out the reaction (2S)-4-acetamido-2-aminobutanoate = L-ectoine + H2O. The protein operates within amine and polyamine biosynthesis; ectoine biosynthesis; L-ectoine from L-aspartate 4-semialdehyde: step 3/3. In terms of biological role, catalyzes the circularization of gamma-N-acetyl-alpha,gamma-diaminobutyric acid (ADABA) to ectoine (1,4,5,6-tetrahydro-2-methyl-4-pyrimidine carboxylic acid), which is an excellent osmoprotectant. The protein is L-ectoine synthase of Thermobifida fusca (strain YX).